The chain runs to 473 residues: UDP-N-acetylmuramoylalanine--D-glutamate ligase (473 aa).

Position 120-126 (120-126) interacts with ATP; the sequence is GSNGKTT.

The protein belongs to the MurCDEF family.

It localises to the cytoplasm. The enzyme catalyses UDP-N-acetyl-alpha-D-muramoyl-L-alanine + D-glutamate + ATP = UDP-N-acetyl-alpha-D-muramoyl-L-alanyl-D-glutamate + ADP + phosphate + H(+). Its pathway is cell wall biogenesis; peptidoglycan biosynthesis. In terms of biological role, cell wall formation. Catalyzes the addition of glutamate to the nucleotide precursor UDP-N-acetylmuramoyl-L-alanine (UMA). The chain is UDP-N-acetylmuramoylalanine--D-glutamate ligase from Nitrosospira multiformis (strain ATCC 25196 / NCIMB 11849 / C 71).